The following is a 1149-amino-acid chain: Bone sialoprotein-binding protein (1149 aa).

An N-terminal signal peptide occupies residues 1–52; sequence MINRDNKKAITKKGMISNRLNKFSIRKYTVGTASILVGTTLIFGLGNQEAKA. The segment at 53 to 601 is ligand binding A region; it reads AENTSTENAK…GDGTVKPEEK (549 aa). 2 disordered regions span residues 54 to 249 and 675 to 697; these read ENTS…TAPT and LPTK…VTVK. The span at 61-75 shows a compositional bias: basic and acidic residues; the sequence is AKQDEASASDNKEVV. Over residues 77-89 the composition is skewed to polar residues; the sequence is ETENNSTQKNDLT. The span at 92-106 shows a compositional bias: basic and acidic residues; that stretch reads IKKETNTDSHQEAKE. The segment covering 109–126 has biased composition (low complexity); the sequence is TTSSTQQQQNNATTSTET. Basic and acidic residues predominate over residues 130–145; sequence NIEKENVKPSTDKTAT. A compositionally biased stretch (polar residues) spans 158 to 205; the sequence is PNNTNNDVTTKPSTSEIQTTPTTPQESTNIENSQPQPTPSKVDNQVTD. Over residues 216 to 241 the composition is skewed to basic and acidic residues; that stretch reads SKEELKNNPEKLKELVRNDSNTDRST. CNA-B domains follow at residues 602–714, 715–824, and 825–935; these read LYKI…YKEP, KYNL…YKTP, and KYSL…EEDT. Residues 896–1124 form a disordered region; it reads TQTGTNTTED…TGSENNGSNN (229 aa). Composition is skewed to acidic residues over residues 903 to 913 and 930 to 1088; these read TEDDKDADGGE and YFEE…DSDS. The LPXTG sorting signal motif lies at 1112–1116; that stretch reads LPETG. Pentaglycyl murein peptidoglycan amidated threonine is present on T1115. Positions 1116–1149 are cleaved as a propeptide — removed by sortase; it reads GSENNGSNNATLFGGLFAALGSLLLFGRRKKQNK.

It belongs to the serine-aspartate repeat-containing protein (SDr) family.

The protein resides in the secreted. It localises to the cell wall. Its function is as follows. Specifically interacts with bone sialoprotein (BSP), a glycoprotein of bone and dentin extracellular matrix. Could contribute to staphylococcal osteomyelitis and arthritis. In Staphylococcus aureus, this protein is Bone sialoprotein-binding protein (bbp).